We begin with the raw amino-acid sequence, 441 residues long: COP9 signalosome complex subunit 1 (441 aa).

Residues 1-28 are disordered; sequence MERDEEASGPMMEMCTNGGEETSNRRPI. Residues 230–400 enclose the PCI domain; the sequence is KYKLAARKFL…KILYARHADQ (171 aa).

It belongs to the CSN1 family. Component of the CSN complex, probably composed of CSN1, CSN2, CSN3, CSN4, CSN5 (CSN5A or CSN5B), CSN6 (CSN6A or CSN6B), CSN7 and CSN8. Interacts with itself and (via PCI domain) with CSN7 (via PCI domain). In the CSN complex, it probably interacts directly with CSN2, CSN3, CSN4 and CSN5B. Interacts with the 26S proteasome subunit RPN6. Interacts (via N-terminal domain) with TSA1 (via C-terminal domain). Binds to the translation initiation factors TIF3C1, TIF3E1 and TIF3H1. Expressed in leaves, flowers, immature siliques, and light-grown roots.

The protein localises to the cytoplasm. Its subcellular location is the nucleus. Its function is as follows. Component of the COP9 signalosome complex (CSN), a complex involved in various cellular and developmental processes such as photomorphogenesis and auxin and jasmonate responses. The CSN complex is an essential regulator of the ubiquitin (Ubl) conjugation pathway by mediating the deneddylation of the cullin subunits of SCF-type E3 ligase complexes, leading to decrease the Ubl ligase activity of SCF. It is involved in repression of photomorphogenesis in darkness by regulating the activity of COP1-containing Ubl ligase complexes. The complex is also required for degradation of IAA6 by regulating the activity of the Ubl ligase SCF-TIR complex. In the complex, it plays a central role in CSN assembly. This chain is COP9 signalosome complex subunit 1 (CSN1), found in Arabidopsis thaliana (Mouse-ear cress).